The primary structure comprises 223 residues: uncharacterized protein (223 aa).

Residues 117–148 are disordered; the sequence is THAHTHAHTHGHTHTRAHSTHAHTHAHSHYHT.

This is an uncharacterized protein from Homo sapiens (Human).